Consider the following 447-residue polypeptide: Argininosuccinate synthase (447 aa).

Residues 20–28 (AFSGGLDTS) and Ala46 contribute to the ATP site. Residue Tyr102 coordinates L-citrulline. Positions 132 and 134 each coordinate ATP. L-aspartate-binding residues include Thr134, Asn138, and Asp139. Asn138 contacts L-citrulline. Asp139 provides a ligand contact to ATP. Residues Arg142 and Ser195 each coordinate L-citrulline. Position 197 (Asp197) interacts with ATP. L-citrulline contacts are provided by Thr204, Glu206, and Glu283.

It belongs to the argininosuccinate synthase family. Type 2 subfamily. As to quaternary structure, homotetramer.

Its subcellular location is the cytoplasm. The enzyme catalyses L-citrulline + L-aspartate + ATP = 2-(N(omega)-L-arginino)succinate + AMP + diphosphate + H(+). The protein operates within amino-acid biosynthesis; L-arginine biosynthesis; L-arginine from L-ornithine and carbamoyl phosphate: step 2/3. The protein is Argininosuccinate synthase (argG) of Neisseria meningitidis serogroup A / serotype 4A (strain DSM 15465 / Z2491).